Here is a 155-residue protein sequence, read N- to C-terminus: Cytochrome c-type biogenesis protein CcmE (155 aa).

Over 1–8 the chain is Cytoplasmic; that stretch reads MHPKRKQR. A helical; Signal-anchor for type II membrane protein transmembrane segment spans residues 9–29; that stretch reads LILVLFVVLVSSVGVSLTLYA. At 30-155 the chain is on the periplasmic side; sequence LNENINLFYP…KTCKGISYDS (126 aa). 2 residues coordinate heme: His124 and Tyr128.

Belongs to the CcmE/CycJ family.

The protein resides in the cell inner membrane. In terms of biological role, heme chaperone required for the biogenesis of c-type cytochromes. Transiently binds heme delivered by CcmC and transfers the heme to apo-cytochromes in a process facilitated by CcmF and CcmH. This chain is Cytochrome c-type biogenesis protein CcmE, found in Teredinibacter turnerae (strain ATCC 39867 / T7901).